The following is a 173-amino-acid chain: Lipoprotein signal peptidase (173 aa).

A run of 2 helical transmembrane segments spans residues 67-87 (WISL…PHLG) and 92-112 (MGFG…FAFG). Catalysis depends on residues Asp-116 and Asp-132. A helical transmembrane segment spans residues 125 to 145 (FPVFNGADIAINLGLACLLIG). A disordered region spans residues 151–173 (SRTPAPARPASKQIREPTDTTGG). The span at 163 to 173 (QIREPTDTTGG) shows a compositional bias: basic and acidic residues.

This sequence belongs to the peptidase A8 family.

It is found in the cell inner membrane. It catalyses the reaction Release of signal peptides from bacterial membrane prolipoproteins. Hydrolyzes -Xaa-Yaa-Zaa-|-(S,diacylglyceryl)Cys-, in which Xaa is hydrophobic (preferably Leu), and Yaa (Ala or Ser) and Zaa (Gly or Ala) have small, neutral side chains.. It functions in the pathway protein modification; lipoprotein biosynthesis (signal peptide cleavage). This protein specifically catalyzes the removal of signal peptides from prolipoproteins. This chain is Lipoprotein signal peptidase, found in Gloeobacter violaceus (strain ATCC 29082 / PCC 7421).